Here is a 291-residue protein sequence, read N- to C-terminus: 33 kDa chaperonin (291 aa).

Cystine bridges form between Cys-236-Cys-238 and Cys-269-Cys-272.

The protein belongs to the HSP33 family. Post-translationally, under oxidizing conditions two disulfide bonds are formed involving the reactive cysteines. Under reducing conditions zinc is bound to the reactive cysteines and the protein is inactive.

It is found in the cytoplasm. In terms of biological role, redox regulated molecular chaperone. Protects both thermally unfolding and oxidatively damaged proteins from irreversible aggregation. Plays an important role in the bacterial defense system toward oxidative stress. The sequence is that of 33 kDa chaperonin from Lactobacillus johnsonii (strain CNCM I-12250 / La1 / NCC 533).